Here is a 267-residue protein sequence, read N- to C-terminus: Undecaprenyl-diphosphatase (267 aa).

7 consecutive transmembrane segments (helical) span residues 7–29 (LILGIIEGLTEFLPVSSTGHMIL), 41–61 (FWKSFLIIIQLGSILAVIFVF), 69–89 (LDIWLKLAAGFFPTGVIGLFV), 96–116 (LFNGWVVVGMLIFGGVVFILI), 173–193 (AAEFSFLLAIPTMIIATAYSI), 207–227 (IPLGIGFITAFVVAVLVIKFF), and 239–259 (FGIYRIILGFVFFYLYYSGIL).

The protein belongs to the UppP family.

The protein localises to the cell inner membrane. The enzyme catalyses di-trans,octa-cis-undecaprenyl diphosphate + H2O = di-trans,octa-cis-undecaprenyl phosphate + phosphate + H(+). Catalyzes the dephosphorylation of undecaprenyl diphosphate (UPP). Confers resistance to bacitracin. The chain is Undecaprenyl-diphosphatase from Campylobacter jejuni subsp. jejuni serotype O:6 (strain 81116 / NCTC 11828).